A 378-amino-acid polypeptide reads, in one-letter code: Transcription initiation factor IIA subunit 1 (378 aa).

Ala2 is modified (N-acetylalanine). Low complexity-rich tracts occupy residues 69-79 (QVQQQHQPQQQ), 89-106 (QQAQ…TQQV), and 247-281 (PAQA…TGDT). 2 disordered regions span residues 69–108 (QVQQ…QVLI) and 247–331 (PAQA…QELF). 4 positions are modified to phosphoserine; by TAF1: Ser282, Ser283, Ser318, and Ser323. Positions 282 to 331 (SSEEDEDEEEDYDDDEEEDKEKDGAEDGQVEEEPLNSEDDVSDEEGQELF) are enriched in acidic residues. 2 residues coordinate DNA: His345 and Arg346.

This sequence belongs to the TFIIA subunit 1 family. As to quaternary structure, TFIIA is a heterodimer of the large unprocessed subunit 1 and a small subunit gamma. It was originally believed to be a heterotrimer of an alpha (p35), a beta (p19) and a gamma subunit (p12). TFIIA forms a complex with TBP. Part of TBP-based Pol II pre-initiation complex (PIC), in which Pol II core assembles with general transcription factors and other specific initiation factors including GTF2E1, GTF2E2, GTF2F1, GTF2F2, TCEA1, ERCC2, ERCC3, GTF2H2, GTF2H3, GTF2H4, GTF2H5, GTF2A1, GTF2A2, GTF2B and TBP; this large multi-subunit PIC complex mediates DNA unwinding and targets Pol II core to the transcription start site where the first phosphodiester bond forms. The alpha and beta subunits are postranslationally produced from the precursor form by TASP1. The cleavage promotes proteasomal degradation. Expressed in pachytene spermatocytes and spermatids.

Its subcellular location is the nucleus. In terms of biological role, TFIIA is a component of the transcription machinery of RNA polymerase II and plays an important role in transcriptional activation. TFIIA in a complex with TBP mediates transcriptional activity. This is Transcription initiation factor IIA subunit 1 (Gtf2a1) from Mus musculus (Mouse).